Reading from the N-terminus, the 296-residue chain is MFCEFAIIGTTASGKSALALQIAQEFSGVILSLDSLALYKQIDIASAKPSRKELASVKHFGVDEIYPNENFSVGMFFKIYERAKDYALNADCPLIITGGSGFYLRSMLSGLAPDVPKCDKALSNDEIYALAARIDPEFCAKFSPNDSYRLEKWYQIYKFSGAVPSTWLRENTSEPVIKELAIFEILWSAQAIRERIQRRTQAMFEAGLLEEAKFLFDTYGRELKPLRSIGLKECADFFDAKISREELASLICTHTAQLAKRQRTFNRSQFSKIFIGEPDAAREKIKGFLKNQAKRP.

9–16 is an ATP binding site; the sequence is GTTASGKS. 11-16 contacts substrate; sequence TASGKS. Residues 34 to 37 form an interaction with substrate tRNA region; the sequence is DSLA.

Belongs to the IPP transferase family. In terms of assembly, monomer. Mg(2+) serves as cofactor.

It carries out the reaction adenosine(37) in tRNA + dimethylallyl diphosphate = N(6)-dimethylallyladenosine(37) in tRNA + diphosphate. In terms of biological role, catalyzes the transfer of a dimethylallyl group onto the adenine at position 37 in tRNAs that read codons beginning with uridine, leading to the formation of N6-(dimethylallyl)adenosine (i(6)A). In Campylobacter curvus (strain 525.92), this protein is tRNA dimethylallyltransferase.